The sequence spans 217 residues: Methylthioribulose-1-phosphate dehydratase (217 aa).

2 residues coordinate Zn(2+): histidine 106 and histidine 108.

The protein belongs to the aldolase class II family. MtnB subfamily. Requires Zn(2+) as cofactor.

It catalyses the reaction 5-(methylsulfanyl)-D-ribulose 1-phosphate = 5-methylsulfanyl-2,3-dioxopentyl phosphate + H2O. Its pathway is amino-acid biosynthesis; L-methionine biosynthesis via salvage pathway; L-methionine from S-methyl-5-thio-alpha-D-ribose 1-phosphate: step 2/6. Catalyzes the dehydration of methylthioribulose-1-phosphate (MTRu-1-P) into 2,3-diketo-5-methylthiopentyl-1-phosphate (DK-MTP-1-P). The protein is Methylthioribulose-1-phosphate dehydratase of Xanthomonas campestris pv. campestris (strain B100).